The sequence spans 347 residues: Protein RecA (347 aa).

Gly-67 to Thr-74 is a binding site for ATP.

The protein belongs to the RecA family.

The protein localises to the cytoplasm. In terms of biological role, can catalyze the hydrolysis of ATP in the presence of single-stranded DNA, the ATP-dependent uptake of single-stranded DNA by duplex DNA, and the ATP-dependent hybridization of homologous single-stranded DNAs. It interacts with LexA causing its activation and leading to its autocatalytic cleavage. This is Protein RecA from Helicobacter pylori (strain P12).